Consider the following 128-residue polypeptide: Large ribosomal subunit protein bL12 (128 aa).

It belongs to the bacterial ribosomal protein bL12 family. As to quaternary structure, homodimer. Part of the ribosomal stalk of the 50S ribosomal subunit. Forms a multimeric L10(L12)X complex, where L10 forms an elongated spine to which 2 to 4 L12 dimers bind in a sequential fashion. Binds GTP-bound translation factors.

Functionally, forms part of the ribosomal stalk which helps the ribosome interact with GTP-bound translation factors. Is thus essential for accurate translation. The chain is Large ribosomal subunit protein bL12 from Methylobacillus flagellatus (strain ATCC 51484 / DSM 6875 / VKM B-1610 / KT).